Here is a 638-residue protein sequence, read N- to C-terminus: Threonine--tRNA ligase (638 aa).

The region spanning 1–61 (MPIITLPDGT…DYDAEIKIIT (61 aa)) is the TGS domain. Positions 242–533 (DHRKIGKKMD…LIENYAGNFP (292 aa)) are catalytic. Cys-333, His-384, and His-510 together coordinate Zn(2+).

It belongs to the class-II aminoacyl-tRNA synthetase family. In terms of assembly, homodimer. Requires Zn(2+) as cofactor.

It is found in the cytoplasm. The enzyme catalyses tRNA(Thr) + L-threonine + ATP = L-threonyl-tRNA(Thr) + AMP + diphosphate + H(+). In terms of biological role, catalyzes the attachment of threonine to tRNA(Thr) in a two-step reaction: L-threonine is first activated by ATP to form Thr-AMP and then transferred to the acceptor end of tRNA(Thr). Also edits incorrectly charged L-seryl-tRNA(Thr). In Prochlorococcus marinus (strain MIT 9211), this protein is Threonine--tRNA ligase.